Here is a 525-residue protein sequence, read N- to C-terminus: GMP synthase [glutamine-hydrolyzing] (525 aa).

Positions 9 to 207 constitute a Glutamine amidotransferase type-1 domain; sequence RILILDFGSQ…VQDICGCEAL (199 aa). Cysteine 86 (nucleophile) is an active-site residue. Active-site residues include histidine 181 and glutamate 183. The region spanning 208–400 is the GMPS ATP-PPase domain; that stretch reads WTASNIVEDA…LGLPYDMVYR (193 aa). Residue 235–241 coordinates ATP; it reads SGGVDSS.

Homodimer.

It catalyses the reaction XMP + L-glutamine + ATP + H2O = GMP + L-glutamate + AMP + diphosphate + 2 H(+). It participates in purine metabolism; GMP biosynthesis; GMP from XMP (L-Gln route): step 1/1. Functionally, catalyzes the synthesis of GMP from XMP. The chain is GMP synthase [glutamine-hydrolyzing] from Pseudomonas putida (strain GB-1).